The primary structure comprises 2549 residues: Serine/threonine-protein kinase mTOR (2549 aa).

Residue Met-1 is modified to N-acetylmethionine. The tract at residues 1–651 (MLGTGPAVAT…HVVSQTAVQV (651 aa)) is interaction with NBN. 32 HEAT repeats span residues 16–53 (SSNV…MELR), 55–99 (MSQE…VEGG), 100–137 (NSTR…AMAG), 138–179 (DTFT…AISV), 180–220 (PTFF…LILT), 222–276 (QREP…RISS), 277–313 (MEGE…PRHI), 314–364 (TPFT…CCRD), 365–409 (LMEE…AFTD), 410–445 (TQYL…VAVR), 446–494 (SEFK…RAMG), 495–529 (PGIQ…RQIP), 530–563 (QLKK…GLAH), 564–596 (QLAS…EFEG), 597–636 (HSLT…SIHL), 637–683 (ISGH…DERF), 686–724 (HLAQ…MNPA), 727–766 (MPFL…NAPR), 769–811 (RPYM…VSGL), 814–853 (RKWV…STGY), 857–893 (PYRK…LLGA), 894–942 (LDPY…GNLP), 943–988 (LDEF…KCVQ), 989–1027 (FLPQ…KSHI), 1029–1068 (PYMD…GEFK), 1069–1105 (LYLP…LFGA), 1106–1144 (NLDD…RLTE), 1145–1188 (SLDF…GKKY), 1189–1225 (QIFI…LADE), 1226–1273 (EEDP…GAAR), 1274–1311 (RVSK…QAYN), and 1312–1345 (PMAR…ELAL). Position 567 is a phosphoserine (Ser-567). Thr-1162 carries the phosphothreonine modification. Lys-1218 bears the N6-acetyllysine mark. Ser-1261 carries the phosphoserine modification. TPR repeat units lie at residues 1346–1382 (TSQD…GIVL), 1383–1408 (LGER…QKGP), 1409–1442 (TPAI…HFGE), 1443–1473 (LEIQ…NKED), 1474–1507 (PELM…VNDE), 1508–1541 (TQAK…RDTH), 1542–1574 (DGAF…LDAE), 1575–1614 (LTAM…RREI), 1615–1649 (IRQI…PHED), 1650–1693 (MRTW…PTAH), 1694–1731 (PQVT…AQHA), 1732–1786 (IATE…DRSW), 1787–1846 (YKAW…STEG), 1898–1930 (NNLQ…VKAI), 1931–1970 (QIDT…YHPQ), and 1971–2005 (ALIY…SNTL). The FAT domain maps to 1382–1982 (LLGERAAKCR…IYPLTVASKS (601 aa)). Residues Lys-1662, Lys-1702, and Arg-1749 each coordinate 1D-myo-inositol hexakisphosphate. The segment covering 1825-1860 (ITNATTAATTAASAAAATSTEGSNSESEAESNENSP) has biased composition (low complexity). The disordered stretch occupies residues 1825–1867 (ITNATTAATTAASAAAATSTEGSNSESEAESNENSPTPSPLQK). The tract at residues 2012–2144 (VSEELIRVAI…DLELAVPGTY (133 aa)) is sufficient for interaction with the FKBP1A/rapamycin complex. Residue Lys-2066 forms a Glycyl lysine isopeptide (Lys-Gly) (interchain with G-Cter in ubiquitin) linkage. One can recognise a PI3K/PI4K catalytic domain in the interval 2156–2469 (IAPSLQVITS…GVELGEPAHK (314 aa)). At Ser-2159 the chain carries Phosphoserine; by TBK1. The tract at residues 2162 to 2168 (VITSKQR) is G-loop. Thr-2164 is subject to Phosphothreonine. Ser-2165 and Gln-2167 together coordinate ATP. Phosphothreonine; by PKB/AKT1 is present on Thr-2173. The ATP site is built by Leu-2185, Lys-2187, Glu-2190, Tyr-2225, Gly-2238, Trp-2239, Val-2240, and Thr-2245. Positions 2258–2296 (KILLNIEHRIMLRMAPDYDHLTLMQKVEVFEHAVNNTAG) are interaction with MLST8. The tract at residues 2335–2343 (GLGDRHPSN) is catalytic loop. Mg(2+) is bound at residue Asn-2343. Positions 2345 and 2356 each coordinate ATP. Positions 2355–2380 (HIDFGDCFEVAMTREKFPEKIPFRLT) are activation loop. Residue Asp-2357 participates in Mg(2+) binding. Thr-2446 is subject to Phosphothreonine; by RPS6KB1. Phosphoserine; by RPS6KB1 is present on Ser-2448. Phosphoserine is present on residues Ser-2478 and Ser-2481. In terms of domain architecture, FATC spans 2517-2549 (DTLDVPTQVELLIKQATSHENLCQCYIGWCPFW).

This sequence belongs to the PI3/PI4-kinase family. Part of the mechanistic target of rapamycin complex 1 (mTORC1) which contains MTOR, MLST8 and RPTOR. The mTORC1 complex is a 1 Md obligate dimer of two stoichiometric heterotetramers with overall dimensions of 290 A x 210 A x 135 A. It has a rhomboid shape and a central cavity, the dimeric interfaces are formed by interlocking interactions between the two MTOR and the two RPTOR subunits. The MLST8 subunit forms distal foot-like protuberances, and contacts only one MTOR within the complex, while the small AKT1S1/PRAS40 localizes to the midsection of the central core, in close proximity to RPTOR. mTORC1 associates with AKT1S1/PRAS40, which inhibits its activity by blocking MTOR substrate-recruitment site. Component of the mechanistic target of rapamycin complex 2 (mTORC2), consisting in two heterotretramers composed of MTOR, MLST8, RICTOR and MAPKAP1/SIN1. Interacts with PLPP7 and PML. Interacts with PRR5 and RICTOR; the interaction is direct within the mTORC2 complex and interaction with RICTOR is enhanced by deubiquitination of RICTOR by USP9X. mTORC1 and mTORC2 associate with DEPTOR, which regulates their activity. Interacts with WAC; WAC positively regulates MTOR activity by promoting the assembly of the TTT complex composed of TELO2, TTI1 and TTI2 and the RUVBL complex composed of RUVBL1 and RUVBL2 into the TTT-RUVBL complex which leads to the dimerization of the mTORC1 complex and its subsequent activation. Interacts with UBQLN1. Interacts with TTI1 and TELO2. Interacts with CLIP1; phosphorylates and regulates CLIP1. Interacts with NBN. Interacts with HTR6. Interacts with BRAT1. Interacts with MEAK7 (via C-terminal domain); the interaction increases upon nutrient stimulation. Interacts with TM4SF5; the interaction is positively regulated by arginine and is negatively regulated by leucine. Interacts with GPR137B. Interacts with NCKAP1L. Interacts with TPCN1 and TPCN2; the interaction is required for TPCN1 and TPCN2 sensitivity to ATP. Interacts with ATP6V1A and with CRYAB, forming a ternary complex. Interacts with SLC38A7; this interaction mediates the recruitment of mTORC1 to the lysosome and its subsequent activation. Interacts with TSPAN8. Autophosphorylates when part of mTORC1 or mTORC2. Phosphorylation at Ser-1261, Ser-2159 and Thr-2164 promotes autophosphorylation. Phosphorylated at Ser-2448 by RPS6KB1. Phosphorylation in the kinase domain modulates the interactions of MTOR with RPTOR and AKT1S1/PRAS40 and leads to increased intrinsic mTORC1 kinase activity. Phosphorylation at Ser-2159 by TBK1 in response to growth factors and pathogen recognition receptors promotes mTORC1 activity. Phosphorylation at Ser-2159 by TBK1 in response to EGF growth factor promotes mTORC2 activity, leading to AKT1 phosphorylation and activation. Phosphorylation at Thr-2173 in the ATP-binding region by AKT1 strongly reduces kinase activity. Post-translationally, ubiquitinated at Lys-2066 by the SCF(FBXO22) complex via 'Lys-27'-linked ubiquitination prevents mTORC1 substrate recruitment.

It localises to the lysosome membrane. Its subcellular location is the endoplasmic reticulum membrane. The protein localises to the golgi apparatus membrane. The protein resides in the cell membrane. It is found in the mitochondrion outer membrane. It localises to the cytoplasm. Its subcellular location is the nucleus. The protein localises to the PML body. The protein resides in the microsome membrane. It is found in the cytoplasmic vesicle. It localises to the phagosome. The catalysed reaction is L-seryl-[protein] + ATP = O-phospho-L-seryl-[protein] + ADP + H(+). It carries out the reaction L-threonyl-[protein] + ATP = O-phospho-L-threonyl-[protein] + ADP + H(+). It catalyses the reaction L-tyrosyl-[protein] + ATP = O-phospho-L-tyrosyl-[protein] + ADP + H(+). Its activity is regulated as follows. The mTORC1 complex is activated in response to nutrients, growth factors or amino acids: activation requires relocalization of the mTORC1 complex to lysosomes that is mediated by the Ragulator complex, SLC38A9, and the Rag GTPases RagA/RRAGA, RagB/RRAGB, RagC/RRAGC and RagD/RRAGD. Activation of mTORC1 by growth factors such as insulin involves AKT1-mediated phosphorylation of TSC1-TSC2, which leads to the activation of the RHEB GTPase a potent activator of the protein kinase activity of mTORC1. Insulin-stimulated and amino acid-dependent phosphorylation at Ser-1261 promotes autophosphorylation and the activation of mTORC1. On the other hand, low cellular energy levels can inhibit mTORC1 through activation of PRKAA1 while hypoxia inhibits mTORC1 through a REDD1-dependent mechanism which may also require PRKAA1. The kinase activity of MTOR within the mTORC1 complex is positively regulated by MLST8. The kinase activity of MTOR is inhibited by DEPTOR and AKT1S1. The non-canonical mTORC1 complex is independent of the RHEB GTPase and specifically mediates phosphorylation of MiT/TFE factors TFEB and TFE3 but not other mTORC1 substrates: it is activated by FLCN, which activates Rag GTPases RagC/RRAGC and RagD/RRAGD. MTOR is the target of the immunosuppressive and anti-cancer drug rapamycin which acts in complex with FKBP1A/FKBP12, and specifically inhibits its kinase activity. mTORC2 is also activated by growth factors, but seems to be nutrient-insensitive. mTORC2 associates and is directly activated by ribosomes. mTORC2 may also be regulated by RHEB but in an indirect manner through the PI3K signaling pathway. Its function is as follows. Serine/threonine protein kinase which is a central regulator of cellular metabolism, growth and survival in response to hormones, growth factors, nutrients, energy and stress signals. MTOR directly or indirectly regulates the phosphorylation of at least 800 proteins. Functions as part of 2 structurally and functionally distinct signaling complexes mTORC1 and mTORC2 (mTOR complex 1 and 2). In response to nutrients, growth factors or amino acids, mTORC1 is recruited to the lysosome membrane and promotes protein, lipid and nucleotide synthesis by phosphorylating key regulators of mRNA translation and ribosome synthesis. This includes phosphorylation of EIF4EBP1 and release of its inhibition toward the elongation initiation factor 4E (eiF4E). Moreover, phosphorylates and activates RPS6KB1 and RPS6KB2 that promote protein synthesis by modulating the activity of their downstream targets including ribosomal protein S6, eukaryotic translation initiation factor EIF4B, and the inhibitor of translation initiation PDCD4. Stimulates the pyrimidine biosynthesis pathway, both by acute regulation through RPS6KB1-mediated phosphorylation of the biosynthetic enzyme CAD, and delayed regulation, through transcriptional enhancement of the pentose phosphate pathway which produces 5-phosphoribosyl-1-pyrophosphate (PRPP), an allosteric activator of CAD at a later step in synthesis, this function is dependent on the mTORC1 complex. Regulates ribosome synthesis by activating RNA polymerase III-dependent transcription through phosphorylation and inhibition of MAF1 an RNA polymerase III-repressor. Activates dormant ribosomes by mediating phosphorylation of SERBP1, leading to SERBP1 inactivation and reactivation of translation. In parallel to protein synthesis, also regulates lipid synthesis through SREBF1/SREBP1 and LPIN1. To maintain energy homeostasis mTORC1 may also regulate mitochondrial biogenesis through regulation of PPARGC1A. In the same time, mTORC1 inhibits catabolic pathways: negatively regulates autophagy through phosphorylation of ULK1. Under nutrient sufficiency, phosphorylates ULK1 at 'Ser-758', disrupting the interaction with AMPK and preventing activation of ULK1. Also prevents autophagy through phosphorylation of the autophagy inhibitor DAP. Also prevents autophagy by phosphorylating RUBCNL/Pacer under nutrient-rich conditions. Prevents autophagy by mediating phosphorylation of AMBRA1, thereby inhibiting AMBRA1 ability to mediate ubiquitination of ULK1 and interaction between AMBRA1 and PPP2CA. mTORC1 exerts a feedback control on upstream growth factor signaling that includes phosphorylation and activation of GRB10 a INSR-dependent signaling suppressor. Among other potential targets mTORC1 may phosphorylate CLIP1 and regulate microtubules. The mTORC1 complex is inhibited in response to starvation and amino acid depletion. The non-canonical mTORC1 complex, which acts independently of RHEB, specifically mediates phosphorylation of MiT/TFE factors TFEB and TFE3 in the presence of nutrients, promoting their cytosolic retention and inactivation. Upon starvation or lysosomal stress, inhibition of mTORC1 induces dephosphorylation and nuclear translocation of TFEB and TFE3, promoting their transcription factor activity. The mTORC1 complex regulates pyroptosis in macrophages by promoting GSDMD oligomerization. MTOR phosphorylates RPTOR which in turn inhibits mTORC1. As part of the mTORC2 complex, MTOR transduces signals from growth factors to pathways involved in proliferation, cytoskeletal organization, lipogenesis and anabolic output. In response to growth factors, mTORC2 phosphorylates and activates AGC protein kinase family members, including AKT (AKT1, AKT2 and AKT3), PKC (PRKCA, PRKCB and PRKCE) and SGK1. In contrast to mTORC1, mTORC2 is nutrient-insensitive. mTORC2 plays a critical role in AKT1 activation by mediating phosphorylation of different sites depending on the context, such as 'Thr-450', 'Ser-473', 'Ser-477' or 'Thr-479', facilitating the phosphorylation of the activation loop of AKT1 on 'Thr-308' by PDPK1/PDK1 which is a prerequisite for full activation. mTORC2 also regulates the phosphorylation of SGK1 at 'Ser-422'. mTORC2 may regulate the actin cytoskeleton, through phosphorylation of PRKCA, PXN and activation of the Rho-type guanine nucleotide exchange factors RHOA and RAC1A or RAC1B. The mTORC2 complex also phosphorylates various proteins involved in insulin signaling, such as FBXW8 and IGF2BP1. May also regulate insulin signaling by acting as a tyrosine protein kinase that catalyzes phosphorylation of IGF1R and INSR. Regulates osteoclastogenesis by adjusting the expression of CEBPB isoforms. Plays an important regulatory role in the circadian clock function; regulates period length and rhythm amplitude of the suprachiasmatic nucleus (SCN) and liver clocks. The polypeptide is Serine/threonine-protein kinase mTOR (Mus musculus (Mouse)).